A 567-amino-acid chain; its full sequence is Glutamate--tRNA ligase (567 aa).

The 'HIGH' region signature appears at 106–116 (PNPDGPLHLGN).

The protein belongs to the class-I aminoacyl-tRNA synthetase family. Glutamate--tRNA ligase type 2 subfamily.

It localises to the cytoplasm. The enzyme catalyses tRNA(Glu) + L-glutamate + ATP = L-glutamyl-tRNA(Glu) + AMP + diphosphate. In terms of biological role, catalyzes the attachment of glutamate to tRNA(Glu) in a two-step reaction: glutamate is first activated by ATP to form Glu-AMP and then transferred to the acceptor end of tRNA(Glu). In Sulfolobus acidocaldarius (strain ATCC 33909 / DSM 639 / JCM 8929 / NBRC 15157 / NCIMB 11770), this protein is Glutamate--tRNA ligase.